A 244-amino-acid polypeptide reads, in one-letter code: uncharacterized protein (244 aa).

Positions 5-244 constitute a GP-PDE domain; sequence QLLLAHRGYS…ANKKFEIKIN (240 aa).

To glycerophosphoryl diester phosphodiesterases (EC 3.1.4.46). The protein to M.genitalium MG385.

This is an uncharacterized protein from Mycoplasma genitalium (strain ATCC 33530 / DSM 19775 / NCTC 10195 / G37) (Mycoplasmoides genitalium).